The primary structure comprises 497 residues: Signal recognition particle subunit SRP54 2 (497 aa).

Positions methionine 1 to leucine 295 are G-domain. GTP-binding positions include glycine 108–threonine 115, aspartate 190–arginine 194, and threonine 248–aspartate 251. An M-domain region spans residues glycine 296–aspartate 497.

It belongs to the GTP-binding SRP family. SRP54 subfamily. Component of a signal recognition particle (SRP) complex that consists of a 7SL RNA molecule of 300 nucleotides and six protein subunits: SRP72, SRP68, SRP54, SRP19, SRP14 and SRP9.

Its subcellular location is the cytoplasm. The protein resides in the endoplasmic reticulum. It carries out the reaction GTP + H2O = GDP + phosphate + H(+). In terms of biological role, component of the signal recognition particle (SRP) complex, a ribonucleoprotein complex that mediates the cotranslational targeting of secretory and membrane proteins to the endoplasmic reticulum (ER). As part of the SRP complex, associates with the SRP receptor (SR) component SRPRA to target secretory proteins to the endoplasmic reticulum membrane. Binds to the signal sequence of presecretory proteins when they emerge from the ribosomes. Displays basal GTPase activity, and stimulates reciprocal GTPase activation of the SR subunit SRPRA. Forms a guanosine 5'-triphosphate (GTP)-dependent complex with the SR subunit SRPRA. SR compaction and GTPase mediated rearrangement of SR drive SRP-mediated cotranslational protein translocation into the ER. Requires the presence of SRP9/SRP14 and/or SRP19 to stably interact with RNA. The chain is Signal recognition particle subunit SRP54 2 (SRP54-2) from Hordeum vulgare (Barley).